A 446-amino-acid polypeptide reads, in one-letter code: MSAPAVSQGRNVVVIGTQWGDEGKGKIVDWLTDHAQGVVRFQGGHNAGHTLIIGGKKTILRLIPSGIMRDGVACYIGNGVVLSPEALFKEIDELESAGVEVKSRLRISEATTLILPYHIAIDKAREIKRGAAKIGTTGRGIGPAYEDKVARRALRVQDLFDPAYFAERLRENLDFHNFVLTQYLNHPALDFQQTLDEMLPYGERLAPMVTDVSAELFAANAAGKNLMFEGAQGTLLDIDHGTYPFVTSSNCVAGNAAAGAGVGPGQLHYILGITKAYCTRVGSGPFPSELYDADNPARQDPTGVRLANVGKEFGSVTGRPRRTGWLDAAALRRAIQINGVSGLCMTKLDVLDGLETIKLCVGYMLDGKSIDILPRGSDAVARCQPVYEEFPGWNTSTFGLKEWDALPETAQAYLKRVEEVAGIPIAMISTGPDRDETILLRHPYKD.

Residues 20–26 and 48–50 each bind GTP; these read GDEGKGK and GHT. The active-site Proton acceptor is D21. Residues D21 and G48 each contribute to the Mg(2+) site. IMP-binding positions include 21–24, 46–49, T137, R151, Q232, T247, and R319; these read DEGK and NAGH. H49 serves as the catalytic Proton donor. Residue 315-321 participates in substrate binding; the sequence is SVTGRPR. Residues R321, 347–349, and 429–431 each bind GTP; these read KLD and STG.

This sequence belongs to the adenylosuccinate synthetase family. Homodimer. It depends on Mg(2+) as a cofactor.

It is found in the cytoplasm. It catalyses the reaction IMP + L-aspartate + GTP = N(6)-(1,2-dicarboxyethyl)-AMP + GDP + phosphate + 2 H(+). Its pathway is purine metabolism; AMP biosynthesis via de novo pathway; AMP from IMP: step 1/2. Its function is as follows. Plays an important role in the de novo pathway of purine nucleotide biosynthesis. Catalyzes the first committed step in the biosynthesis of AMP from IMP. This chain is Adenylosuccinate synthetase, found in Ralstonia nicotianae (strain ATCC BAA-1114 / GMI1000) (Ralstonia solanacearum).